The sequence spans 1401 residues: DNA-directed RNA polymerase subunit beta (1401 aa).

It belongs to the RNA polymerase beta chain family. In terms of assembly, the RNAP catalytic core consists of 2 alpha, 1 beta, 1 beta' and 1 omega subunit. When a sigma factor is associated with the core the holoenzyme is formed, which can initiate transcription.

It carries out the reaction RNA(n) + a ribonucleoside 5'-triphosphate = RNA(n+1) + diphosphate. In terms of biological role, DNA-dependent RNA polymerase catalyzes the transcription of DNA into RNA using the four ribonucleoside triphosphates as substrates. This is DNA-directed RNA polymerase subunit beta from Zymomonas mobilis subsp. mobilis (strain ATCC 31821 / ZM4 / CP4).